The sequence spans 226 residues: Tyramine N-feruloyltransferase 4/11 (226 aa).

Residues 29-45 form an important in binding site and for catalytic activity region; that stretch reads HIYKLFYQIHEYHNYTH. The N-acetyltransferase domain occupies 72–222; that stretch reads VLLLEVSPTP…VGDALQKYAD (151 aa).

Belongs to the acetyltransferase family. In terms of assembly, homodimer.

The protein localises to the cytoplasm. It carries out the reaction tyramine + (E)-feruloyl-CoA = N-[(E)-feruloyl]tyramine + CoA + H(+). Its activity is regulated as follows. Inhibited by (2-hydroxyphenyl)amino sulfinyl acetic acid 1,1-dimethylethyl ester, by DEPC and by N-ethylmaleimide. Synthesizes amides which are involved in stress response in the cell wall. Catalyzes the synthesis of hydroxycinnamic acid amides from hydroxycinnamoyl-CoA thioesters and various hydroxyphenylethylamines such as 4-coumaroyl-CoA and sinapoyl-CoA. The polypeptide is Tyramine N-feruloyltransferase 4/11 (THT4) (Nicotiana tabacum (Common tobacco)).